We begin with the raw amino-acid sequence, 555 residues long: MKSDIEIAQEAKMLHIREVAKKLDIEEDYLEYYGKYKAKISPALSEKIKDRKDGKLILVTAITPTPAGEGKTTLTVGLGQALAKIGKKAMIALREPSLGPCMGIKGGAAGGGYSQVVPMEDINLHFTGDLHAITAAHNLLAAMIDNHIHHGNELNIDIRAITWKRAMDMNDRALREIIVGLGGKANGFPRQDGFIITVASEVMAILCLAQDLMDLKRRIGDIIVAYDKDGNPVTARDLKADGAMTVLLKDAIKPNLVQTIENVPAFVHGGPFANIAHGCNSLIATKYGLKLADYLVTEAGFGADLGAEKFFDIKSRFGGLTPNAAVIVATVRALKMHGGVKKEDLQKEDVEAVRRGIENLEKQVENVRKFGVPVVVALNRFVFDTEREIEEVRKACEEMGVDMAVAEVWEKGGEGGIELAEKVVKACETPSNFHVLYDETLPIKDKLHIIATEIYGADGVEYTASALKDIANLERLGFDKMPIVVAKTQYSLSDDPKLLGRPRGFKITVRELRVSMGAGFVVVFTGDIMTMPGLPKHPAAENIDIDENGRITGLF.

Position 65–72 (65–72 (TPAGEGKT)) interacts with ATP.

It belongs to the formate--tetrahydrofolate ligase family.

It catalyses the reaction (6S)-5,6,7,8-tetrahydrofolate + formate + ATP = (6R)-10-formyltetrahydrofolate + ADP + phosphate. It functions in the pathway one-carbon metabolism; tetrahydrofolate interconversion. The protein is Formate--tetrahydrofolate ligase of Thermoanaerobacter sp. (strain X514).